Reading from the N-terminus, the 392-residue chain is Formate-dependent phosphoribosylglycinamide formyltransferase (392 aa).

N(1)-(5-phospho-beta-D-ribosyl)glycinamide contacts are provided by residues 22–23 and Glu82; that span reads EL. Residues Arg114, Lys155, 160–165, 195–198, and Glu203 each bind ATP; these read SSGKGQ and EKII. Residues 119 to 308 enclose the ATP-grasp domain; that stretch reads VLVSKKLNIL…EFALHVRSFL (190 aa). Positions 267 and 279 each coordinate Mg(2+). N(1)-(5-phospho-beta-D-ribosyl)glycinamide contacts are provided by residues Asp286, Lys355, and 362 to 363; that span reads RR.

It belongs to the PurK/PurT family. As to quaternary structure, homodimer.

The enzyme catalyses N(1)-(5-phospho-beta-D-ribosyl)glycinamide + formate + ATP = N(2)-formyl-N(1)-(5-phospho-beta-D-ribosyl)glycinamide + ADP + phosphate + H(+). The protein operates within purine metabolism; IMP biosynthesis via de novo pathway; N(2)-formyl-N(1)-(5-phospho-D-ribosyl)glycinamide from N(1)-(5-phospho-D-ribosyl)glycinamide (formate route): step 1/1. Involved in the de novo purine biosynthesis. Catalyzes the transfer of formate to 5-phospho-ribosyl-glycinamide (GAR), producing 5-phospho-ribosyl-N-formylglycinamide (FGAR). Formate is provided by PurU via hydrolysis of 10-formyl-tetrahydrofolate. The polypeptide is Formate-dependent phosphoribosylglycinamide formyltransferase (Wigglesworthia glossinidia brevipalpis).